The sequence spans 436 residues: Glutamate-1-semialdehyde 2,1-aminomutase (436 aa).

K272 carries the post-translational modification N6-(pyridoxal phosphate)lysine.

It belongs to the class-III pyridoxal-phosphate-dependent aminotransferase family. HemL subfamily. As to quaternary structure, homodimer. The cofactor is pyridoxal 5'-phosphate.

The protein resides in the cytoplasm. It catalyses the reaction (S)-4-amino-5-oxopentanoate = 5-aminolevulinate. It participates in porphyrin-containing compound metabolism; protoporphyrin-IX biosynthesis; 5-aminolevulinate from L-glutamyl-tRNA(Glu): step 2/2. Its pathway is porphyrin-containing compound metabolism; chlorophyll biosynthesis. The protein is Glutamate-1-semialdehyde 2,1-aminomutase of Methylibium petroleiphilum (strain ATCC BAA-1232 / LMG 22953 / PM1).